We begin with the raw amino-acid sequence, 357 residues long: UDP-N-acetylglucosamine--N-acetylmuramyl-(pentapeptide) pyrophosphoryl-undecaprenol N-acetylglucosamine transferase (357 aa).

UDP-N-acetyl-alpha-D-glucosamine-binding positions include 12 to 14, asparagine 124, arginine 163, serine 191, isoleucine 245, 264 to 269, and glutamine 290; these read TGG and ALTVSE.

Belongs to the glycosyltransferase 28 family. MurG subfamily.

The protein resides in the cell inner membrane. The catalysed reaction is di-trans,octa-cis-undecaprenyl diphospho-N-acetyl-alpha-D-muramoyl-L-alanyl-D-glutamyl-meso-2,6-diaminopimeloyl-D-alanyl-D-alanine + UDP-N-acetyl-alpha-D-glucosamine = di-trans,octa-cis-undecaprenyl diphospho-[N-acetyl-alpha-D-glucosaminyl-(1-&gt;4)]-N-acetyl-alpha-D-muramoyl-L-alanyl-D-glutamyl-meso-2,6-diaminopimeloyl-D-alanyl-D-alanine + UDP + H(+). It functions in the pathway cell wall biogenesis; peptidoglycan biosynthesis. In terms of biological role, cell wall formation. Catalyzes the transfer of a GlcNAc subunit on undecaprenyl-pyrophosphoryl-MurNAc-pentapeptide (lipid intermediate I) to form undecaprenyl-pyrophosphoryl-MurNAc-(pentapeptide)GlcNAc (lipid intermediate II). The chain is UDP-N-acetylglucosamine--N-acetylmuramyl-(pentapeptide) pyrophosphoryl-undecaprenol N-acetylglucosamine transferase from Nitrosospira multiformis (strain ATCC 25196 / NCIMB 11849 / C 71).